A 262-amino-acid polypeptide reads, in one-letter code: MAIITMKSLLEAGVHFGHQVKRLDPRMKRFIFSERNEIHILDLQKTLQGIKDSYELVQRVIKDGKKVLFVGTKKQASEIIEQEARRSDMPYVNNRWLGGMLSNFNTIRKSVQKLKKLEKMEVDGTFDMISKKEISQLNREKSKLAKNLTGIKDMETLPGAIFIIDPKREQIAINEARKLKIPIISVVDTNCNPDVIDCPIPGNDDAIRSVALFTKIISDAILESDKEVGIQIIENLNEEDLMKEIEIKNDKSDSIEEGGNNL.

The protein belongs to the universal ribosomal protein uS2 family.

In Borreliella burgdorferi (strain ZS7) (Borrelia burgdorferi), this protein is Small ribosomal subunit protein uS2.